The primary structure comprises 553 residues: L-aspartate oxidase (553 aa).

FAD-binding positions include 13–16, lysine 35, 42–49, and aspartate 208; these read SGAA and ASDWAQGG. The active-site Proton donor/acceptor is arginine 275. FAD contacts are provided by residues glutamate 364 and 380 to 381; that span reads SL.

It belongs to the FAD-dependent oxidoreductase 2 family. NadB subfamily. Requires FAD as cofactor.

Its subcellular location is the cytoplasm. The catalysed reaction is L-aspartate + O2 = iminosuccinate + H2O2. Its pathway is cofactor biosynthesis; NAD(+) biosynthesis; iminoaspartate from L-aspartate (oxidase route): step 1/1. In terms of biological role, catalyzes the oxidation of L-aspartate to iminoaspartate, the first step in the de novo biosynthesis of NAD(+). The protein is L-aspartate oxidase (nadB) of Synechocystis sp. (strain ATCC 27184 / PCC 6803 / Kazusa).